Reading from the N-terminus, the 154-residue chain is Probable chemoreceptor glutamine deamidase CheD (154 aa).

Belongs to the CheD family.

It carries out the reaction L-glutaminyl-[protein] + H2O = L-glutamyl-[protein] + NH4(+). In terms of biological role, probably deamidates glutamine residues to glutamate on methyl-accepting chemotaxis receptors (MCPs), playing an important role in chemotaxis. The protein is Probable chemoreceptor glutamine deamidase CheD of Methanococcus maripaludis (strain DSM 14266 / JCM 13030 / NBRC 101832 / S2 / LL).